The sequence spans 121 residues: Phosphoribosyl-ATP pyrophosphatase (121 aa).

The protein belongs to the PRA-PH family.

Its subcellular location is the cytoplasm. The catalysed reaction is 1-(5-phospho-beta-D-ribosyl)-ATP + H2O = 1-(5-phospho-beta-D-ribosyl)-5'-AMP + diphosphate + H(+). The protein operates within amino-acid biosynthesis; L-histidine biosynthesis; L-histidine from 5-phospho-alpha-D-ribose 1-diphosphate: step 2/9. In Burkholderia vietnamiensis (strain G4 / LMG 22486) (Burkholderia cepacia (strain R1808)), this protein is Phosphoribosyl-ATP pyrophosphatase.